Here is a 454-residue protein sequence, read N- to C-terminus: Argininosuccinate lyase (454 aa).

The protein belongs to the lyase 1 family. Argininosuccinate lyase subfamily.

The protein localises to the cytoplasm. It catalyses the reaction 2-(N(omega)-L-arginino)succinate = fumarate + L-arginine. Its pathway is amino-acid biosynthesis; L-arginine biosynthesis; L-arginine from L-ornithine and carbamoyl phosphate: step 3/3. The polypeptide is Argininosuccinate lyase (Herpetosiphon aurantiacus (strain ATCC 23779 / DSM 785 / 114-95)).